A 376-amino-acid polypeptide reads, in one-letter code: Galactoside alpha-(1,2)-fucosyltransferase 1 (376 aa).

At 1 to 12 (MWTPSRKQLCLA) the chain is on the cytoplasmic side. Residues 13 to 29 (FLSVCVLSAGSFFFHLN) traverse the membrane as a helical; Signal-anchor for type II membrane protein segment. At 30 to 376 (GGNFFQNALT…WETDSLFRLA (347 aa)) the chain is on the lumenal side. 3 N-linked (GlcNAc...) asparagine glycosylation sites follow: Asn-64, Asn-302, and Asn-328.

This sequence belongs to the glycosyltransferase 11 family.

Its subcellular location is the golgi apparatus. The protein resides in the golgi stack membrane. It carries out the reaction a beta-D-galactosyl-(1-&gt;4)-N-acetyl-beta-D-glucosaminyl derivative + GDP-beta-L-fucose = an alpha-L-Fuc-(1-&gt;2)-beta-D-Gal-(1-&gt;4)-beta-D-GlcNAc derivative + GDP + H(+). The catalysed reaction is a ganglioside GA1 + GDP-beta-L-fucose = a ganglioside Fuc-GA1 + GDP + H(+). The enzyme catalyses a beta-D-Gal-(1-&gt;3)-beta-D-GlcNAc-(1-&gt;3)-beta-D-Gal-(1-&gt;4)-beta-D-Glc-(1&lt;-&gt;1')-Cer(d18:1(4E)) + GDP-beta-L-fucose = alpha-L-fucosyl-(1-&gt;2)- beta-D-galactosyl-(1-&gt;3)-N-acetyl-beta-D-glucosaminyl-(1-&gt;3)-beta-D-galactosyl-(1-&gt;4)-beta-D-glucosyl-(1&lt;-&gt;1')-N-acylsphing-4-enine + GDP + H(+). It catalyses the reaction a neolactoside nLc4Cer(d18:1(4E)) + GDP-beta-L-fucose = a neolactoside IV(2)-alpha-Fuc-nLc4Cer(d18:1(4E)) + GDP + H(+). It carries out the reaction a ganglioside GM1 + GDP-beta-L-fucose = a ganglioside Fuc-GM1 + GDP + H(+). The catalysed reaction is beta-D-galactosyl-(1-&gt;3)-N-acetyl-D-galactosamine + GDP-beta-L-fucose = alpha-L-fucosyl-(1-&gt;2)-beta-D-galactosyl-(1-&gt;3)-N-acetyl-D-galactosamine + GDP + H(+). The protein operates within protein modification; protein glycosylation. Functionally, catalyzes the transfer of L-fucose, from a guanosine diphosphate-beta-L-fucose, to the terminal galactose residue of glycoconjugates through an alpha(1,2) linkage leading to H antigen synthesis that is an intermediate substrate in the synthesis of ABO blood group antigens. H antigen is essential for maturation of the glomerular layer of the main olfactory bulb, in cell migration and early cell-cell contacts during tumor associated angiogenesis. Preferentially fucosylates soluble lactose and to a lesser extent fucosylates glycolipids gangliosides GA1 and GM1a. In Rattus norvegicus (Rat), this protein is Galactoside alpha-(1,2)-fucosyltransferase 1.